The primary structure comprises 428 residues: Putative F-box protein At3g22421 (428 aa).

Positions 4–50 (TTTISHLPTELLDEIISRVPLKSTRAVRLTCKNWDSLFKNRSFMKEE) constitute an F-box domain.

The polypeptide is Putative F-box protein At3g22421 (Arabidopsis thaliana (Mouse-ear cress)).